The sequence spans 125 residues: Small ribosomal subunit protein uS12 (125 aa).

The tract at residues 9-31 (RQGREVEKIKSKSPAMENSPQRR) is disordered. Asp89 bears the 3-methylthioaspartic acid mark. The segment at 106–125 (GVKDRKQSRSKYGAKRPKKA) is disordered. Basic residues predominate over residues 113–125 (SRSKYGAKRPKKA).

The protein belongs to the universal ribosomal protein uS12 family. Part of the 30S ribosomal subunit. Contacts proteins S8 and S17. May interact with IF1 in the 30S initiation complex.

With S4 and S5 plays an important role in translational accuracy. Its function is as follows. Interacts with and stabilizes bases of the 16S rRNA that are involved in tRNA selection in the A site and with the mRNA backbone. Located at the interface of the 30S and 50S subunits, it traverses the body of the 30S subunit contacting proteins on the other side and probably holding the rRNA structure together. The combined cluster of proteins S8, S12 and S17 appears to hold together the shoulder and platform of the 30S subunit. The chain is Small ribosomal subunit protein uS12 from Polaromonas sp. (strain JS666 / ATCC BAA-500).